The following is a 250-amino-acid chain: ATP synthase subunit a (250 aa).

The next 6 membrane-spanning stretches (helical) occupy residues 29–49 (ASLFMVATVACAAGFLYFATS), 84–104 (FFPMVFSLFMFVLTANLLGMM), 114–134 (IVVTFALAIFVIGTVLVYGFY), 143–163 (LFVPSGVPGALLLLVVPIEVI), 189–209 (VFAGFVASLGSLGALGVGGAL), and 216–236 (VALTGLEFLVAFLQAYVFAVL).

Belongs to the ATPase A chain family. In terms of assembly, F-type ATPases have 2 components, CF(1) - the catalytic core - and CF(0) - the membrane proton channel. CF(1) has five subunits: alpha(3), beta(3), gamma(1), delta(1), epsilon(1). CF(0) has three main subunits: a(1), b(2) and c(9-12). The alpha and beta chains form an alternating ring which encloses part of the gamma chain. CF(1) is attached to CF(0) by a central stalk formed by the gamma and epsilon chains, while a peripheral stalk is formed by the delta and b chains.

It is found in the cell inner membrane. Functionally, key component of the proton channel; it plays a direct role in the translocation of protons across the membrane. In Allorhizobium ampelinum (strain ATCC BAA-846 / DSM 112012 / S4) (Agrobacterium vitis (strain S4)), this protein is ATP synthase subunit a.